The chain runs to 215 residues: MSYKLELLRRALEHNVLKFGTFTLKSGRKSPYFFNSGNFTHGADLCALAEAYAETIIAMNVDFDVIFGPAYKGISLAAITAVKLYEKTGKSYGFAYNRKEAKSHGEGGNLVGAEMEGKKVLLLDDVITAGTAIREAISFLEPKHVKLAGIVLLLDRQERLDPEVNESTIGRLKKELNLPVSSILTLDDIVDFTKSDLTAAESKAMDAYRQQYQAK.

Lys-25 serves as a coordination point for 5-phospho-alpha-D-ribose 1-diphosphate. Position 33-34 (33-34 (FF)) interacts with orotate. Residues 71 to 72 (YK), Arg-98, Lys-99, Lys-102, His-104, and 124 to 132 (DDVITAGTA) each bind 5-phospho-alpha-D-ribose 1-diphosphate. Thr-128 and Arg-156 together coordinate orotate.

The protein belongs to the purine/pyrimidine phosphoribosyltransferase family. PyrE subfamily. Homodimer.

It catalyses the reaction orotidine 5'-phosphate + diphosphate = orotate + 5-phospho-alpha-D-ribose 1-diphosphate. It functions in the pathway pyrimidine metabolism; UMP biosynthesis via de novo pathway; UMP from orotate: step 1/2. Catalyzes the transfer of a ribosyl phosphate group from 5-phosphoribose 1-diphosphate to orotate, leading to the formation of orotidine monophosphate (OMP). This is Orotate phosphoribosyltransferase (ura5) from Schizosaccharomyces pombe (strain 972 / ATCC 24843) (Fission yeast).